Reading from the N-terminus, the 303-residue chain is 2-dehydropantoate 2-reductase (303 aa).

NADP(+) is bound by residues 7–12 (GCGALG), Asn-98, and Ala-122. Residue Asn-98 participates in substrate binding. Catalysis depends on Lys-176, which acts as the Proton donor. Residues Asn-180, Asn-184, Asn-194, and Ser-244 each coordinate substrate. An NADP(+)-binding site is contributed by Glu-256.

It belongs to the ketopantoate reductase family.

It is found in the cytoplasm. The enzyme catalyses (R)-pantoate + NADP(+) = 2-dehydropantoate + NADPH + H(+). The protein operates within cofactor biosynthesis; (R)-pantothenate biosynthesis; (R)-pantoate from 3-methyl-2-oxobutanoate: step 2/2. Functionally, catalyzes the NADPH-dependent reduction of ketopantoate into pantoic acid. This chain is 2-dehydropantoate 2-reductase (panE), found in Yersinia pestis.